Reading from the N-terminus, the 171-residue chain is 3-hydroxydecanoyl-[acyl-carrier-protein] dehydratase (171 aa).

H71 is a catalytic residue.

This sequence belongs to the thioester dehydratase family. FabA subfamily. As to quaternary structure, homodimer.

It localises to the cytoplasm. The catalysed reaction is a (3R)-hydroxyacyl-[ACP] = a (2E)-enoyl-[ACP] + H2O. It catalyses the reaction (3R)-hydroxydecanoyl-[ACP] = (2E)-decenoyl-[ACP] + H2O. The enzyme catalyses (2E)-decenoyl-[ACP] = (3Z)-decenoyl-[ACP]. It participates in lipid metabolism; fatty acid biosynthesis. Its function is as follows. Necessary for the introduction of cis unsaturation into fatty acids. Catalyzes the dehydration of (3R)-3-hydroxydecanoyl-ACP to E-(2)-decenoyl-ACP and then its isomerization to Z-(3)-decenoyl-ACP. Can catalyze the dehydratase reaction for beta-hydroxyacyl-ACPs with saturated chain lengths up to 16:0, being most active on intermediate chain length. The chain is 3-hydroxydecanoyl-[acyl-carrier-protein] dehydratase from Sinorhizobium fredii (strain NBRC 101917 / NGR234).